The sequence spans 541 residues: Putative nucleobase-ascorbate transporter 10 (541 aa).

12 consecutive transmembrane segments (helical) span residues 52 to 72 (LLSL…MGGG), 79 to 99 (VIQT…FFGT), 101 to 121 (LPVI…IIYS), 141 to 161 (IQGA…LGVW), 173 to 193 (IAPL…PLLA), 196 to 216 (VEVG…LPRF), 235 to 255 (GMIL…SSGV), 299 to 319 (SFAM…LFYA), 376 to 396 (RVIQ…KFGA), 397 to 417 (FFAS…LCFV), 433 to 453 (FNIK…PQYF), and 476 to 496 (VIFM…DCTL).

Belongs to the nucleobase:cation symporter-2 (NCS2) (TC 2.A.40) family.

The protein resides in the membrane. The chain is Putative nucleobase-ascorbate transporter 10 (NAT10) from Arabidopsis thaliana (Mouse-ear cress).